Reading from the N-terminus, the 968-residue chain is Chaperone protein ClpB3, chloroplastic (968 aa).

The N-terminal 67 residues, Met1–Arg67, are a transit peptide targeting the chloroplast. A Clp R domain is found at Thr78 to Lys222. Repeat stretches follow at residues Phe82–Gln147 and Leu159–Lys222. An i region spans residues Leu237 to Pro485. Residue Gly282–Thr289 participates in ATP binding. Residues Leu488–Met606 are a coiled coil. The segment at Val611–Ser802 is II. An ATP-binding site is contributed by Gly685 to Thr692.

Belongs to the ClpA/ClpB family.

It localises to the plastid. It is found in the chloroplast. Its function is as follows. Molecular chaperone essential for chloroplast development and seedling viability. Mediates internal thylakoid membrane formation and confers thermotolerance to chloroplasts during heat stress. This Arabidopsis thaliana (Mouse-ear cress) protein is Chaperone protein ClpB3, chloroplastic (CLPB3).